A 967-amino-acid polypeptide reads, in one-letter code: Leucine--tRNA ligase (967 aa).

The 'HIGH' region motif lies at 43 to 53 (PYLSGHLHVGH). The 'KMSKS' region motif lies at 650-654 (KMSKS). Lys653 contributes to the ATP binding site.

The protein belongs to the class-I aminoacyl-tRNA synthetase family.

It localises to the cytoplasm. It catalyses the reaction tRNA(Leu) + L-leucine + ATP = L-leucyl-tRNA(Leu) + AMP + diphosphate. This Pyrococcus horikoshii (strain ATCC 700860 / DSM 12428 / JCM 9974 / NBRC 100139 / OT-3) protein is Leucine--tRNA ligase.